The primary structure comprises 275 residues: Large ribosomal subunit protein uL2 (275 aa).

A compositionally biased stretch (basic and acidic residues) spans 28 to 38; the sequence is RPYEPLVETKS. Disordered stretches follow at residues 28–53 and 222–275; these read RPYE…TTRH and GVAM…RSAK. Basic residues predominate over residues 254–275; the sequence is KGHKTRKNKRTDKMIVRRRSAK.

Belongs to the universal ribosomal protein uL2 family. Part of the 50S ribosomal subunit. Forms a bridge to the 30S subunit in the 70S ribosome.

Its function is as follows. One of the primary rRNA binding proteins. Required for association of the 30S and 50S subunits to form the 70S ribosome, for tRNA binding and peptide bond formation. It has been suggested to have peptidyltransferase activity; this is somewhat controversial. Makes several contacts with the 16S rRNA in the 70S ribosome. This Marinobacter nauticus (strain ATCC 700491 / DSM 11845 / VT8) (Marinobacter aquaeolei) protein is Large ribosomal subunit protein uL2.